The primary structure comprises 618 residues: Probable arginine--tRNA ligase, cytoplasmic (618 aa).

Interaction with tRNA stretches follow at residues 60–61 and 104–109; these read ET and NGIFLR. Residues 146 to 151, His160, Tyr359, Asp363, and Gln387 contribute to the L-arginine site; that span reads EFSSPN. A 'HIGH' region motif is present at residues 149–160; it reads SPNIAKPFHAGH. The tract at residues 496–510 is interaction with tRNA; that stretch reads DTGPYLQYAHSRLSS.

This sequence belongs to the class-I aminoacyl-tRNA synthetase family.

Its subcellular location is the cytoplasm. It carries out the reaction tRNA(Arg) + L-arginine + ATP = L-arginyl-tRNA(Arg) + AMP + diphosphate. Its function is as follows. Forms part of a macromolecular complex that catalyzes the attachment of specific amino acids to cognate tRNAs during protein synthesis. This chain is Probable arginine--tRNA ligase, cytoplasmic (mrs1), found in Schizosaccharomyces pombe (strain 972 / ATCC 24843) (Fission yeast).